The primary structure comprises 689 residues: Small ribosomal subunit protein mS39 (689 aa).

The transit peptide at 1 to 37 (MAVVSAVRWLGLRSRLGQPLTGRRAGLCEQARSCRFY) directs the protein to the mitochondrion. K126 is subject to N6-acetyllysine. 10 PPR repeats span residues 149 to 183 (IKDI…GTTV), 184 to 219 (SLET…EALE), 255 to 289 (NEHS…RLHA), 290 to 330 (DVYT…KVKP), 331 to 367 (NLQT…GIEP), 368 to 409 (SLAT…SPKD), 412 to 446 (DDKF…DNWK), 454 to 488 (RNFY…AYFP), 489 to 523 (HSQT…GHTF), and 572 to 606 (PATS…NKIP). The tract at residues 665–689 (NLTALTSDSDTDSSSDSDSDTSEGK) is disordered. The span at 673 to 689 (SDTDSSSDSDSDTSEGK) shows a compositional bias: acidic residues.

It belongs to the mitochondrion-specific ribosomal protein mS39 family. As to quaternary structure, component of the mitochondrial small ribosomal subunit (mt-SSU). Mature mammalian 55S mitochondrial ribosomes consist of a small (28S) and a large (39S) subunit. The 28S small subunit contains a 12S ribosomal RNA (12S mt-rRNA) and 30 different proteins. The 39S large subunit contains a 16S rRNA (16S mt-rRNA), a copy of mitochondrial valine transfer RNA (mt-tRNA(Val)), which plays an integral structural role, and 52 different proteins. Associated with the 12S mitochondrial rRNA (12S mt-rRNA). As to expression, abundant in testes, skeletal muscle and heart tissue.

The protein localises to the mitochondrion. Mitochondrial RNA-binding protein that has a role in mitochondrial translation. This chain is Small ribosomal subunit protein mS39 (PTCD3), found in Homo sapiens (Human).